The sequence spans 182 residues: Proline-rich protein, Y-linked (182 aa).

Disordered regions lie at residues Met1–Asp22 and Val89–Gly108. The span at Ala91–Gly108 shows a compositional bias: pro residues. The region spanning Trp154–Gln167 is the DUF1725 domain.

The protein is Proline-rich protein, Y-linked (PRORY) of Homo sapiens (Human).